Reading from the N-terminus, the 169-residue chain is Thaumatin-like pathogenesis-related protein 2 (169 aa).

The N-terminal stretch at methionine 1–alanine 21 is a signal peptide.

This sequence belongs to the thaumatin family.

Associated with resistance against stem rust fungi. This Avena sativa (Oat) protein is Thaumatin-like pathogenesis-related protein 2 (RASTL-2).